We begin with the raw amino-acid sequence, 573 residues long: WRKY transcription factor SUSIBA2 (573 aa).

Disordered stretches follow at residues 56–133 and 157–192; these read AHPD…CSRE and PAEV…DDGY. Positions 64–85 are enriched in basic and acidic residues; that stretch reads PRDKSVRNAHEDRGSRDFEFKP. The segment covering 108-122 has biased composition (low complexity); the sequence is MQNQSMNPSSSSSNM. The segment covering 163-182 has biased composition (polar residues); sequence SEPQQMNSSDNAMQEPQSEN. Residues 183-192 are compositionally biased toward basic and acidic residues; that stretch reads VADKSADDGY. Residues 183 to 247 constitute a DNA-binding region (WRKY 1); sequence VADKSADDGY…YKGRHNHPKP (65 aa). Zn(2+) is bound by residues C214, C219, H242, and H244. The disordered stretch occupies residues 240–332; sequence GRHNHPKPQP…EDLESKRRKM (93 aa). Over residues 263-277 the composition is skewed to basic and acidic residues; that stretch reads GEERYDGASAADDKS. The segment at residues 357–422 is a DNA-binding region (WRKY 2); that stretch reads SEVDILDDGY…YEGKHNHEVP (66 aa). Positions 388, 393, 417, and 419 each coordinate Zn(2+).

Belongs to the WRKY group I family. In terms of tissue distribution, expressed in endosperm, but not in leaves.

Its subcellular location is the nucleus. Its function is as follows. Transcription factor involved in starch synthesis. Acts as a transcriptional activator in sugar signaling. Interacts specifically with the SURE and W-box elements, but not with the SP8a element. This chain is WRKY transcription factor SUSIBA2, found in Hordeum vulgare (Barley).